The chain runs to 313 residues: tRNA-cytidine(32) 2-sulfurtransferase (313 aa).

Residues 47-52 (SGGKDS) carry the PP-loop motif motif. The [4Fe-4S] cluster site is built by cysteine 122, cysteine 125, and cysteine 213.

This sequence belongs to the TtcA family. As to quaternary structure, homodimer. Mg(2+) is required as a cofactor. It depends on [4Fe-4S] cluster as a cofactor.

Its subcellular location is the cytoplasm. The catalysed reaction is cytidine(32) in tRNA + S-sulfanyl-L-cysteinyl-[cysteine desulfurase] + AH2 + ATP = 2-thiocytidine(32) in tRNA + L-cysteinyl-[cysteine desulfurase] + A + AMP + diphosphate + H(+). It participates in tRNA modification. Catalyzes the ATP-dependent 2-thiolation of cytidine in position 32 of tRNA, to form 2-thiocytidine (s(2)C32). The sulfur atoms are provided by the cysteine/cysteine desulfurase (IscS) system. This chain is tRNA-cytidine(32) 2-sulfurtransferase, found in Yersinia pseudotuberculosis serotype IB (strain PB1/+).